The sequence spans 20 residues: Equinatoxin-3 (20 aa).

Residues 3–12 form a plays an important role in the hemolytic activity region; that stretch reads AVAGAIIKGA. The interval 11–20 is N-terminal region; the sequence is GAALTFNVLQ.

Belongs to the actinoporin family. Sea anemone subfamily. In terms of assembly, octamer or nonamer in membranes. Monomer in the soluble state.

It is found in the secreted. The protein resides in the nematocyst. The protein localises to the target cell membrane. Functionally, pore-forming protein that forms cations-selective hydrophilic pores of around 1 nm and causes cardiac stimulation and cytolysis. Pore formation is a multi-step process that involves specific recognition of membrane sphingomyelin (but neither cholesterol nor phosphatidylcholine) using aromatic rich region and adjacent phosphocholine (POC) binding site, firm binding to the membrane (mainly driven by hydrophobic interactions) accompanied by the transfer of the N-terminal region to the lipid-water interface and finally pore formation after oligomerization of monomers. Cytolytic effects include red blood cells hemolysis, platelet aggregation and lysis, cytotoxic and cytostatic effects on fibroblasts. Lethality in mammals has been ascribed to severe vasospasm of coronary vessels, cardiac arrhythmia, and inotropic effects. This is Equinatoxin-3 from Actinia equina (Beadlet anemone).